The following is a 154-amino-acid chain: Myoglobin (154 aa).

The 147-residue stretch at 2–148 (GLSEGEWQLV…FRKDIATKYK (147 aa)) folds into the Globin domain. Residue S4 is modified to Phosphoserine. H65 contacts nitrite. H65 serves as a coordination point for O2. At T68 the chain carries Phosphothreonine. Residue H94 participates in heme b binding.

It belongs to the globin family. As to quaternary structure, monomeric.

The protein localises to the cytoplasm. It is found in the sarcoplasm. The catalysed reaction is Fe(III)-heme b-[protein] + nitric oxide + H2O = Fe(II)-heme b-[protein] + nitrite + 2 H(+). It catalyses the reaction H2O2 + AH2 = A + 2 H2O. Monomeric heme protein which primary function is to store oxygen and facilitate its diffusion within muscle tissues. Reversibly binds oxygen through a pentacoordinated heme iron and enables its timely and efficient release as needed during periods of heightened demand. Depending on the oxidative conditions of tissues and cells, and in addition to its ability to bind oxygen, it also has a nitrite reductase activity whereby it regulates the production of bioactive nitric oxide. Under stress conditions, like hypoxia and anoxia, it also protects cells against reactive oxygen species thanks to its pseudoperoxidase activity. This is Myoglobin (MB) from Phocoenoides dalli dalli (Dall's porpoise).